The chain runs to 316 residues: Methionyl-tRNA formyltransferase (316 aa).

114–117 (SLLP) is a (6S)-5,6,7,8-tetrahydrofolate binding site.

This sequence belongs to the Fmt family.

It carries out the reaction L-methionyl-tRNA(fMet) + (6R)-10-formyltetrahydrofolate = N-formyl-L-methionyl-tRNA(fMet) + (6S)-5,6,7,8-tetrahydrofolate + H(+). Its function is as follows. Attaches a formyl group to the free amino group of methionyl-tRNA(fMet). The formyl group appears to play a dual role in the initiator identity of N-formylmethionyl-tRNA by promoting its recognition by IF2 and preventing the misappropriation of this tRNA by the elongation apparatus. In Aromatoleum aromaticum (strain DSM 19018 / LMG 30748 / EbN1) (Azoarcus sp. (strain EbN1)), this protein is Methionyl-tRNA formyltransferase.